The primary structure comprises 131 residues: Large ribosomal subunit protein bL12 (131 aa).

Belongs to the bacterial ribosomal protein bL12 family. Homodimer. Part of the ribosomal stalk of the 50S ribosomal subunit. Forms a multimeric L10(L12)X complex, where L10 forms an elongated spine to which 2 to 4 L12 dimers bind in a sequential fashion. Binds GTP-bound translation factors.

Forms part of the ribosomal stalk which helps the ribosome interact with GTP-bound translation factors. Is thus essential for accurate translation. The chain is Large ribosomal subunit protein bL12 from Prochlorococcus marinus (strain MIT 9312).